A 47-amino-acid polypeptide reads, in one-letter code: Defensin-like protein 1 (47 aa).

Disulfide bonds link Cys-3/Cys-47, Cys-14/Cys-34, Cys-20/Cys-41, and Cys-24/Cys-43.

As to quaternary structure, monomer and homodimer.

Inhibits trypsin but not chymotrypsin. This chain is Defensin-like protein 1, found in Vigna unguiculata (Cowpea).